Reading from the N-terminus, the 245-residue chain is MKIDYLTLFPEMFDGVLNHSILKRAQDKEIIQVNTVNFRDYSINKHNQVDDYPFGGGQGMVLKPEPVFNAMKDLETSEATRVILMCPQGKPFSQEIAQDLSSAEHIVFICGHYEGYDERIREHLVTDEISIGDYVLTGGELPAMTMTDAIVRLIPGVLGNEQSHQDDSFSDGLLEFPQYTRPREFEGMNVPDVLLSGNHAKIDAWRHEQKLIRTFVKRPDLLAKYPLTTEDEKILENYKKQLKTK.

S-adenosyl-L-methionine is bound by residues Gly111 and 131 to 136 (IGDYVL).

This sequence belongs to the RNA methyltransferase TrmD family. Homodimer.

It is found in the cytoplasm. It catalyses the reaction guanosine(37) in tRNA + S-adenosyl-L-methionine = N(1)-methylguanosine(37) in tRNA + S-adenosyl-L-homocysteine + H(+). Specifically methylates guanosine-37 in various tRNAs. This Staphylococcus carnosus (strain TM300) protein is tRNA (guanine-N(1)-)-methyltransferase.